Here is a 666-residue protein sequence, read N- to C-terminus: DNA ligase (666 aa).

NAD(+) is bound by residues 34–38 (DAEYD), 83–84 (SL), and Glu-114. Residue Lys-116 is the N6-AMP-lysine intermediate of the active site. NAD(+)-binding residues include Arg-137, Glu-171, Lys-286, and Lys-310. Cys-404, Cys-407, Cys-422, and Cys-427 together coordinate Zn(2+). The region spanning 588-666 (NTESTISEKS…EEFFAILKGE (79 aa)) is the BRCT domain.

The protein belongs to the NAD-dependent DNA ligase family. LigA subfamily. The cofactor is Mg(2+). It depends on Mn(2+) as a cofactor.

It carries out the reaction NAD(+) + (deoxyribonucleotide)n-3'-hydroxyl + 5'-phospho-(deoxyribonucleotide)m = (deoxyribonucleotide)n+m + AMP + beta-nicotinamide D-nucleotide.. In terms of biological role, DNA ligase that catalyzes the formation of phosphodiester linkages between 5'-phosphoryl and 3'-hydroxyl groups in double-stranded DNA using NAD as a coenzyme and as the energy source for the reaction. It is essential for DNA replication and repair of damaged DNA. The sequence is that of DNA ligase from Mesoplasma florum (strain ATCC 33453 / NBRC 100688 / NCTC 11704 / L1) (Acholeplasma florum).